Reading from the N-terminus, the 290-residue chain is Lipoyl synthase (290 aa).

Positions 44, 49, 55, 70, 74, 77, and 282 each coordinate [4Fe-4S] cluster. The region spanning 56–271 (WGEGTATFMI…ELLGKEMGFR (216 aa)) is the Radical SAM core domain.

It belongs to the radical SAM superfamily. Lipoyl synthase family. The cofactor is [4Fe-4S] cluster.

It localises to the cytoplasm. It catalyses the reaction [[Fe-S] cluster scaffold protein carrying a second [4Fe-4S](2+) cluster] + N(6)-octanoyl-L-lysyl-[protein] + 2 oxidized [2Fe-2S]-[ferredoxin] + 2 S-adenosyl-L-methionine + 4 H(+) = [[Fe-S] cluster scaffold protein] + N(6)-[(R)-dihydrolipoyl]-L-lysyl-[protein] + 4 Fe(3+) + 2 hydrogen sulfide + 2 5'-deoxyadenosine + 2 L-methionine + 2 reduced [2Fe-2S]-[ferredoxin]. The protein operates within protein modification; protein lipoylation via endogenous pathway; protein N(6)-(lipoyl)lysine from octanoyl-[acyl-carrier-protein]: step 2/2. Functionally, catalyzes the radical-mediated insertion of two sulfur atoms into the C-6 and C-8 positions of the octanoyl moiety bound to the lipoyl domains of lipoate-dependent enzymes, thereby converting the octanoylated domains into lipoylated derivatives. The protein is Lipoyl synthase of Flavobacterium psychrophilum (strain ATCC 49511 / DSM 21280 / CIP 103535 / JIP02/86).